We begin with the raw amino-acid sequence, 208 residues long: Dephospho-CoA kinase (208 aa).

In terms of domain architecture, DPCK spans 3–208 (EIGLTGGIGS…ALSAAGVTQA (206 aa)). Residue 11 to 16 (GSGKTR) coordinates ATP.

This sequence belongs to the CoaE family.

The protein localises to the cytoplasm. The enzyme catalyses 3'-dephospho-CoA + ATP = ADP + CoA + H(+). It functions in the pathway cofactor biosynthesis; coenzyme A biosynthesis; CoA from (R)-pantothenate: step 5/5. Catalyzes the phosphorylation of the 3'-hydroxyl group of dephosphocoenzyme A to form coenzyme A. This chain is Dephospho-CoA kinase, found in Cupriavidus pinatubonensis (strain JMP 134 / LMG 1197) (Cupriavidus necator (strain JMP 134)).